A 209-amino-acid chain; its full sequence is Kynurenine formamidase (209 aa).

Tryptophan 20 serves as a coordination point for substrate. Zn(2+) is bound by residues histidine 50, histidine 54, and aspartate 56. Histidine 60 functions as the Proton donor/acceptor in the catalytic mechanism. Residues histidine 161 and glutamate 173 each contribute to the Zn(2+) site.

Belongs to the Cyclase 1 superfamily. KynB family. Homodimer. Zn(2+) is required as a cofactor.

The enzyme catalyses N-formyl-L-kynurenine + H2O = L-kynurenine + formate + H(+). It participates in amino-acid degradation; L-tryptophan degradation via kynurenine pathway; L-kynurenine from L-tryptophan: step 2/2. Functionally, catalyzes the hydrolysis of N-formyl-L-kynurenine to L-kynurenine, the second step in the kynurenine pathway of tryptophan degradation. This chain is Kynurenine formamidase, found in Bacillus mycoides (strain KBAB4) (Bacillus weihenstephanensis).